Consider the following 355-residue polypeptide: Elongation factor Ts (355 aa).

An involved in Mg(2+) ion dislocation from EF-Tu region spans residues 82–85; that stretch reads TDFV.

The protein belongs to the EF-Ts family.

Its subcellular location is the cytoplasm. Functionally, associates with the EF-Tu.GDP complex and induces the exchange of GDP to GTP. It remains bound to the aminoacyl-tRNA.EF-Tu.GTP complex up to the GTP hydrolysis stage on the ribosome. This Helicobacter pylori (strain J99 / ATCC 700824) (Campylobacter pylori J99) protein is Elongation factor Ts (tsf).